The chain runs to 239 residues: Ribonuclease 3 (239 aa).

One can recognise an RNase III domain in the interval 18–141 (YTTLEKALGY…LMAGVYLEAG (124 aa)). E54 contacts Mg(2+). D58 is an active-site residue. Mg(2+) contacts are provided by S127 and E130. Residue E130 is part of the active site. The region spanning 168 to 237 (DYKTALQELT…AYQALQKLKE (70 aa)) is the DRBM domain.

Belongs to the ribonuclease III family. As to quaternary structure, homodimer. The cofactor is Mg(2+).

The protein localises to the cytoplasm. It catalyses the reaction Endonucleolytic cleavage to 5'-phosphomonoester.. Its function is as follows. Digests double-stranded RNA. Involved in the processing of primary rRNA transcript to yield the immediate precursors to the large and small rRNAs (23S and 16S). Processes some mRNAs, and tRNAs when they are encoded in the rRNA operon. Processes pre-crRNA and tracrRNA of type II CRISPR loci if present in the organism. The chain is Ribonuclease 3 from Helicobacter pylori (strain ATCC 700392 / 26695) (Campylobacter pylori).